We begin with the raw amino-acid sequence, 465 residues long: 23S rRNA (uracil(1939)-C(5))-methyltransferase RlmD (465 aa).

The interval 1–24 is disordered; it reads MSEAVPLSTRRASSAGDAPGRAPV. Residues 16 to 80 form the TRAM domain; that stretch reads GDAPGRAPVL…PTYEQAQVVD (65 aa). Residues Cys-93, Cys-99, Cys-102, and Cys-181 each coordinate [4Fe-4S] cluster. S-adenosyl-L-methionine is bound by residues Gln-289, Phe-318, Asn-323, Glu-339, Asn-367, and Asp-388. The Nucleophile role is filled by Cys-421.

The protein belongs to the class I-like SAM-binding methyltransferase superfamily. RNA M5U methyltransferase family. RlmD subfamily.

The enzyme catalyses uridine(1939) in 23S rRNA + S-adenosyl-L-methionine = 5-methyluridine(1939) in 23S rRNA + S-adenosyl-L-homocysteine + H(+). Its function is as follows. Catalyzes the formation of 5-methyl-uridine at position 1939 (m5U1939) in 23S rRNA. This Burkholderia mallei (strain ATCC 23344) protein is 23S rRNA (uracil(1939)-C(5))-methyltransferase RlmD.